An 842-amino-acid polypeptide reads, in one-letter code: Amyloid-beta A4 precursor protein-binding family A member 1 (842 aa).

Disordered stretches follow at residues 1-121 (MNHL…DESA), 238-349 (RLHH…EKRD), and 366-439 (KTRT…KESR). At serine 82 the chain carries Phosphoserine. 2 stretches are compositionally biased toward basic and acidic residues: residues 106–115 (DGYEAERAQD) and 240–258 (HHYD…KEAE). Serine 246, serine 250, serine 252, serine 267, serine 284, and serine 289 each carry phosphoserine. Residue threonine 309 is modified to Phosphothreonine. Phosphoserine occurs at positions 317 and 372. Residue threonine 375 is modified to Phosphothreonine. Positions 392-403 (PTRDCDDQRPVD) are enriched in basic and acidic residues. Over residues 404–421 (GDSPSPGSSSPLGAESSS) the composition is skewed to low complexity. Serine 406, serine 408, serine 413, and serine 573 each carry phosphoserine. The 189-residue stretch at 460-648 (LIDGIIFAAN…LLNTQDMYND (189 aa)) folds into the PID domain. The segment at 631–648 (LSQKEYSDLLNTQDMYND) is autoinhibitory helix linker. 2 PDZ domains span residues 661–746 (DVFI…NIVR) and 752–828 (TVLI…MPAA).

Part of a multimeric complex containing STXBP1 and STX1A. Interacts with STXBP1. Component of the brain-specific heterotrimeric complex (LIN-10-LIN-2-LIN-7 complex) composed of at least APBA1, CASK, and LIN7, which associates with the motor protein KIF17 to transport vesicles along microtubules. Within the complex, interacts (via PDZ domain) with the motor protein KIF17; the interaction is direct and is required for association of KIF17 with the cargo that is to be transported. Binds to the cytoplasmic domain of amyloid protein (APP). Interacts (via PDZ 1 and 2 domains) with FSPB. Isoform 3 interacts (via its truncated PID domain) with active, GTP-bound RAB6A. Also interacts with GTP-bound RAB6B. As to expression, isoform 3 is expressed in brain.

The protein localises to the cytoplasm. It is found in the perinuclear region. It localises to the nucleus. Its subcellular location is the golgi apparatus. Putative function in synaptic vesicle exocytosis by binding to Munc18-1, an essential component of the synaptic vesicle exocytotic machinery. May modulate processing of the amyloid-beta precursor protein (APP) and hence formation of AAP-beta. Component of the LIN-10-LIN-2-LIN-7 complex, which associates with the motor protein KIF17 to transport vesicles containing N-methyl-D-aspartate (NMDA) receptor subunit NR2B along microtubules. This is Amyloid-beta A4 precursor protein-binding family A member 1 from Mus musculus (Mouse).